A 214-amino-acid polypeptide reads, in one-letter code: Orotate phosphoribosyltransferase (214 aa).

Lysine 26 provides a ligand contact to 5-phospho-alpha-D-ribose 1-diphosphate. Residue 34–35 (FF) coordinates orotate. Residues 72 to 73 (YK), arginine 99, lysine 100, lysine 103, histidine 105, and 124 to 132 (DDVITAGTA) each bind 5-phospho-alpha-D-ribose 1-diphosphate. Orotate is bound by residues threonine 128 and arginine 157.

It belongs to the purine/pyrimidine phosphoribosyltransferase family. PyrE subfamily. Homodimer. Requires Mg(2+) as cofactor.

The catalysed reaction is orotidine 5'-phosphate + diphosphate = orotate + 5-phospho-alpha-D-ribose 1-diphosphate. It participates in pyrimidine metabolism; UMP biosynthesis via de novo pathway; UMP from orotate: step 1/2. In terms of biological role, catalyzes the transfer of a ribosyl phosphate group from 5-phosphoribose 1-diphosphate to orotate, leading to the formation of orotidine monophosphate (OMP). The polypeptide is Orotate phosphoribosyltransferase (Pseudomonas fluorescens (strain SBW25)).